The primary structure comprises 381 residues: UDP-4-amino-4-deoxy-L-arabinose--oxoglutarate aminotransferase (381 aa).

Lys-182 carries the N6-(pyridoxal phosphate)lysine modification.

It belongs to the DegT/DnrJ/EryC1 family. ArnB subfamily. In terms of assembly, homodimer. The cofactor is pyridoxal 5'-phosphate.

The catalysed reaction is UDP-4-amino-4-deoxy-beta-L-arabinose + 2-oxoglutarate = UDP-beta-L-threo-pentopyranos-4-ulose + L-glutamate. It participates in nucleotide-sugar biosynthesis; UDP-4-deoxy-4-formamido-beta-L-arabinose biosynthesis; UDP-4-deoxy-4-formamido-beta-L-arabinose from UDP-alpha-D-glucuronate: step 2/3. Its pathway is bacterial outer membrane biogenesis; lipopolysaccharide biosynthesis. Catalyzes the conversion of UDP-4-keto-arabinose (UDP-Ara4O) to UDP-4-amino-4-deoxy-L-arabinose (UDP-L-Ara4N). The modified arabinose is attached to lipid A and is required for resistance to polymyxin and cationic antimicrobial peptides. The polypeptide is UDP-4-amino-4-deoxy-L-arabinose--oxoglutarate aminotransferase (Photorhabdus laumondii subsp. laumondii (strain DSM 15139 / CIP 105565 / TT01) (Photorhabdus luminescens subsp. laumondii)).